A 351-amino-acid chain; its full sequence is Beta-hexosaminidase (351 aa).

Substrate-binding positions include D62, R70, R134, and 164–165 (KH). The active-site Proton donor/acceptor is H177. Catalysis depends on D249, which acts as the Nucleophile.

It belongs to the glycosyl hydrolase 3 family. NagZ subfamily. Monomer.

It localises to the cytoplasm. The enzyme catalyses Hydrolysis of terminal non-reducing N-acetyl-D-hexosamine residues in N-acetyl-beta-D-hexosaminides.. Its pathway is cell wall biogenesis; peptidoglycan recycling. In terms of biological role, plays a role in peptidoglycan recycling by cleaving the terminal beta-1,4-linked N-acetylglucosamine (GlcNAc) from peptide-linked peptidoglycan fragments, giving rise to free GlcNAc, anhydro-N-acetylmuramic acid and anhydro-N-acetylmuramic acid-linked peptides. The protein is Beta-hexosaminidase of Pasteurella multocida (strain Pm70).